The sequence spans 299 residues: Biotin synthase (299 aa).

The region spanning 22–252 (TSNLKLDLCS…NVTIKIAAGR (231 aa)) is the Radical SAM core domain. Residues cysteine 40, cysteine 44, and cysteine 47 each coordinate [4Fe-4S] cluster. [2Fe-2S] cluster is bound by residues cysteine 116, cysteine 176, and lysine 247.

Belongs to the radical SAM superfamily. Biotin synthase family. As to quaternary structure, homodimer. [4Fe-4S] cluster is required as a cofactor. [2Fe-2S] cluster serves as cofactor.

The catalysed reaction is (4R,5S)-dethiobiotin + (sulfur carrier)-SH + 2 reduced [2Fe-2S]-[ferredoxin] + 2 S-adenosyl-L-methionine = (sulfur carrier)-H + biotin + 2 5'-deoxyadenosine + 2 L-methionine + 2 oxidized [2Fe-2S]-[ferredoxin]. It participates in cofactor biosynthesis; biotin biosynthesis; biotin from 7,8-diaminononanoate: step 2/2. Its function is as follows. Catalyzes the conversion of dethiobiotin (DTB) to biotin by the insertion of a sulfur atom into dethiobiotin via a radical-based mechanism. This is Biotin synthase from Thermotoga petrophila (strain ATCC BAA-488 / DSM 13995 / JCM 10881 / RKU-1).